The chain runs to 496 residues: Lysine--tRNA ligase (496 aa).

Mg(2+) contacts are provided by glutamate 409 and glutamate 416.

It belongs to the class-II aminoacyl-tRNA synthetase family. As to quaternary structure, homodimer. Mg(2+) is required as a cofactor.

It localises to the cytoplasm. The enzyme catalyses tRNA(Lys) + L-lysine + ATP = L-lysyl-tRNA(Lys) + AMP + diphosphate. This chain is Lysine--tRNA ligase, found in Streptococcus thermophilus (strain ATCC BAA-491 / LMD-9).